Reading from the N-terminus, the 2363-residue chain is Highly reducing polyketide synthase cnsI (2363 aa).

The region spanning 14-440 (PEPIAIIGMS…GSNAHAIVES (427 aa)) is the Ketosynthase family 3 (KS3) domain. Catalysis depends on for beta-ketoacyl synthase activity residues cysteine 187, histidine 322, and histidine 363. The tract at residues 546-854 (LAFVFTGQGA…FLQVLKSINA (309 aa)) is malonyl-CoA:ACP transacylase (MAT) domain. Serine 638 functions as the For malonyltransferase activity in the catalytic mechanism. The interval 938–1068 (HDLLGSPMDF…GTFTLHYDAR (131 aa)) is N-terminal hotdog fold. The interval 938-1224 (HDLLGSPMDF…RLDSIASDVS (287 aa)) is dehydratase (DH) domain. The PKS/mFAS DH domain maps to 938–1246 (HDLLGSPMDF…LGPVPMSKVP (309 aa)). The Proton acceptor; for dehydratase activity role is filled by histidine 970. A C-terminal hotdog fold region spans residues 1089–1246 (TAECETNRDA…LGPVPMSKVP (158 aa)). Aspartate 1159 (proton donor; for dehydratase activity) is an active-site residue. The segment at 1669-1976 (GGQWVEDRQL…ARQTGISVAI (308 aa)) is enoylreductase (ER) domain. Positions 2001-2177 (TYLLAGGLGM…PGHSIDIGLV (177 aa)) are catalytic ketoreductase (KRc) domain. One can recognise a Carrier domain in the interval 2279 to 2357 (EDASYVVNQA…VLSEKIAAQS (79 aa)). An O-(pantetheine 4'-phosphoryl)serine modification is found at serine 2317.

The protein operates within alkaloid biosynthesis. Highly reducing polyketide synthase; part of the gene cluster that mediates the biosynthesis of communesins, a prominent class of indole alkaloids with great potential as pharmaceuticals. Communesins are biosynthesized by the coupling of tryptamine and aurantioclavine, two building blocks derived from L-tryptophan. The L-tryptophan decarboxylase cnsB converts L-tryptophan to tryptamine, whereas the tryptophan dimethylallyltransferase cnsF converts L-tryptophan to 4-dimethylallyl tryptophan which is further transformed to aurantioclavine by the aurantioclavine synthase cnsA, probably aided by the catalase cnsD. The cytochrome P450 monooxygenase cnsC catalyzes the heterodimeric coupling between the two different indole moieties, tryptamine and aurantioclavine, to construct vicinal quaternary stereocenters and yield the heptacyclic communesin scaffold. The O-methyltransferase cnsE then methylates the communesin scaffold to produce communesin K, the simplest characterized communesin that contains the heptacyclic core. The dioxygenase cnsJ converts communesin K into communesin I. Acylation to introduce the hexadienyl group at position N16 of communesin I by the acyltransferase cnsK leads to the production of communesin B. The hexadienyl group is produced by the highly reducing polyketide synthase cnsI, before being hydrolytically removed from cnsI by the serine hydrolase cnsH, converted into hexadienyl-CoA by the CoA ligase cnsG, and then transferred to communesin I by cnsK. Surprisingly, cnsK may also be a promiscuous acyltransferase that can tolerate a range of acyl groups, including acetyl-, propionyl-, and butyryl-CoA, which lead to communesins A, G and H respectively. The roles of the alpha-ketoglutarate-dependent dioxygenases cnsM and cnsP have still to be determined. In Penicillium expansum (Blue mold rot fungus), this protein is Highly reducing polyketide synthase cnsI.